An 860-amino-acid chain; its full sequence is Ubiquitin fusion degradation protein 3 homolog (860 aa).

WD repeat units lie at residues 27–65 (AHKS…YTKT), 71–112 (PKGI…PYAI), 115–154 (EHKQ…SSSF), 163–203 (GHTL…SVFK), 204–242 (GHTD…ILRK), and 244–283 (ATQA…DGNL). The PFU domain maps to 397-497 (PIHYLEEITR…DKLSKGAASA (101 aa)). The interval 494-585 (AASAQSGYED…LPQNKKKPRG (92 aa)) is disordered. Residues 586-856 (PLVPVPDFYI…KNIARDIVEM (271 aa)) form the PUL domain.

The protein belongs to the WD repeat PLAP family. As to quaternary structure, interacts with cdc-48.1. As to expression, expressed in intestine (at protein level).

The protein resides in the cytoplasm. In terms of biological role, plays a role in protein ubiquitination, sorting and degradation through its association with cdc-48.1 and/or cdc-48.2. The polypeptide is Ubiquitin fusion degradation protein 3 homolog (Caenorhabditis elegans).